A 447-amino-acid polypeptide reads, in one-letter code: MKLGVFVYRLYRALTYGVSPLIHLHIRWRRLRGLEHFSRWPERFGHPSAVRPPGSLIWFHAVSLGEGMAAIPVIRHCNEVKSDLTILMTTTTVSAFEVIKNQLPVGVLHQFAPLDTPLAIDRFLGHWKPNAIIIMENELWPNLIMAASGLLIPLGLLNARMSTKSFKRWSSPLLLPLVSLLLSKFSLIAPLSTLQGIRFQLLHAPPFVINYSGDLKYVVNKFHVSSGTSESIRDLKVELAEMKVWIASSLHRGEEEVILGVHNMLLESHPDSVVIIVPRHPHHGQQIAHKLRKDGQSVALRSQNEKLTPRKTNIYVVDTLGELRELYSVAPIAVIGGSFIPGLTGHNLSEAAAAGCAVITGCHVGHFSHMVKAMQQANPLSVTQVSTKLELKEAVDLLLSNPEILETHQRASKDVYESLSSCIITNIWKLLNLHIFRGKSRNHIECK.

A mitochondrion-targeting transit peptide spans 1–32 (MKLGVFVYRLYRALTYGVSPLIHLHIRWRRLR). Glutamate 66 serves as the catalytic Proton acceptor. CMP contacts are provided by residues 278-279 (PR), 320-322 (LGE), and 347-350 (NLSE).

The protein belongs to the glycosyltransferase group 1 family. Glycosyltransferase 30 subfamily. In terms of tissue distribution, expressed in leaves, stems and flowers.

The protein resides in the mitochondrion. It carries out the reaction lipid IVA (E. coli) + CMP-3-deoxy-beta-D-manno-octulosonate = alpha-Kdo-(2-&gt;6)-lipid IVA (E. coli) + CMP + H(+). It catalyses the reaction alpha-Kdo-(2-&gt;6)-lipid IVA (E. coli) + CMP-3-deoxy-beta-D-manno-octulosonate = alpha-Kdo-(2-&gt;4)-alpha-Kdo-(2-&gt;6)-lipid IVA (E. coli) + CMP + H(+). It participates in glycolipid biosynthesis; KDO(2)-lipid A biosynthesis; KDO(2)-lipid A from CMP-3-deoxy-D-manno-octulosonate and lipid IV(A): step 1/4. The protein operates within glycolipid biosynthesis; KDO(2)-lipid A biosynthesis; KDO(2)-lipid A from CMP-3-deoxy-D-manno-octulosonate and lipid IV(A): step 2/4. Functionally, involved in the biosynthesis of lipid A, a phosphorylated glycolipid that in bacteria anchors the lipopolysaccharide to the outer membrane of the cell. Catalyzes the transfer of two 3-deoxy-D-manno-octulosonate (Kdo) residues from CMP-Kdo to lipid IV(A), the tetraacyldisaccharide-1,4'-bisphosphate precursor of lipid A. Lipid A-like molecules in plants may serve as structural components of the outer membranes of mitochondria and/or chloroplasts, or may be involved in signal transduction or plant defense responses. The sequence is that of Probable 3-deoxy-D-manno-octulosonic acid transferase, mitochondrial (KDTA) from Arabidopsis thaliana (Mouse-ear cress).